We begin with the raw amino-acid sequence, 339 residues long: Ribosomal RNA small subunit methyltransferase H (339 aa).

S-adenosyl-L-methionine-binding positions include 56–58, aspartate 76, phenylalanine 102, aspartate 123, and glutamine 130; that span reads GGH. Disordered regions lie at residues 274-309 and 320-339; these read RHSR…KAEV and LRVA…PQHS. Residues 325 to 339 show a composition bias toward polar residues; the sequence is RTDTPYNTDPSPQHS.

Belongs to the methyltransferase superfamily. RsmH family.

It localises to the cytoplasm. The enzyme catalyses cytidine(1402) in 16S rRNA + S-adenosyl-L-methionine = N(4)-methylcytidine(1402) in 16S rRNA + S-adenosyl-L-homocysteine + H(+). Functionally, specifically methylates the N4 position of cytidine in position 1402 (C1402) of 16S rRNA. This chain is Ribosomal RNA small subunit methyltransferase H, found in Psychrobacter sp. (strain PRwf-1).